Reading from the N-terminus, the 331-residue chain is Ketol-acid reductoisomerase (NADP(+)) (331 aa).

A KARI N-terminal Rossmann domain is found at 2-181; it reads TKVYYEDAVK…GATRAGVIET (180 aa). NADP(+) contacts are provided by residues 25 to 28, Arg48, Ser52, and 82 to 85; these read YGSQ and DETQ. Residue His107 is part of the active site. Gly133 is a binding site for NADP(+). In terms of domain architecture, KARI C-terminal knotted spans 182–327; that stretch reads TFKEETETDL…AELREMMPFV (146 aa). Mg(2+)-binding residues include Asp190, Glu194, Glu226, and Glu230. Residue Ser251 participates in substrate binding.

Belongs to the ketol-acid reductoisomerase family. Mg(2+) is required as a cofactor.

The enzyme catalyses (2R)-2,3-dihydroxy-3-methylbutanoate + NADP(+) = (2S)-2-acetolactate + NADPH + H(+). It carries out the reaction (2R,3R)-2,3-dihydroxy-3-methylpentanoate + NADP(+) = (S)-2-ethyl-2-hydroxy-3-oxobutanoate + NADPH + H(+). It participates in amino-acid biosynthesis; L-isoleucine biosynthesis; L-isoleucine from 2-oxobutanoate: step 2/4. The protein operates within amino-acid biosynthesis; L-valine biosynthesis; L-valine from pyruvate: step 2/4. Functionally, involved in the biosynthesis of branched-chain amino acids (BCAA). Catalyzes an alkyl-migration followed by a ketol-acid reduction of (S)-2-acetolactate (S2AL) to yield (R)-2,3-dihydroxy-isovalerate. In the isomerase reaction, S2AL is rearranged via a Mg-dependent methyl migration to produce 3-hydroxy-3-methyl-2-ketobutyrate (HMKB). In the reductase reaction, this 2-ketoacid undergoes a metal-dependent reduction by NADPH to yield (R)-2,3-dihydroxy-isovalerate. This Listeria innocua serovar 6a (strain ATCC BAA-680 / CLIP 11262) protein is Ketol-acid reductoisomerase (NADP(+)).